A 404-amino-acid chain; its full sequence is Probable ribosomal oxygenase HI_0396 (404 aa).

Residues 102 to 231 form the JmjC domain; the sequence is ELGQLWNKFG…LIDGISKGFC (130 aa). Fe cation-binding residues include H135, D137, and H199.

It belongs to the ROX family. Fe(2+) is required as a cofactor.

In terms of biological role, oxygenase that catalyzes the hydroxylation of a ribosomal protein. The chain is Probable ribosomal oxygenase HI_0396 from Haemophilus influenzae (strain ATCC 51907 / DSM 11121 / KW20 / Rd).